An 817-amino-acid polypeptide reads, in one-letter code: Lon protease 1 (817 aa).

Residues 18–216 (VPLLPLRDII…KLYELMQGEI (199 aa)) enclose the Lon N-terminal domain. 368 to 375 (GPPGVGKT) is an ATP binding site. Positions 604–785 (EDQVGIVTGL…DDVLREALVL (182 aa)) constitute a Lon proteolytic domain. Active-site residues include S691 and K734. Residues 789–817 (EEFGRKPTTDGGKLGGTTELPASPAVAPA) are disordered.

The protein belongs to the peptidase S16 family. As to quaternary structure, homohexamer. Organized in a ring with a central cavity.

It localises to the cytoplasm. It catalyses the reaction Hydrolysis of proteins in presence of ATP.. Functionally, ATP-dependent serine protease that mediates the selective degradation of mutant and abnormal proteins as well as certain short-lived regulatory proteins. Required for cellular homeostasis and for survival from DNA damage and developmental changes induced by stress. Degrades polypeptides processively to yield small peptide fragments that are 5 to 10 amino acids long. Binds to DNA in a double-stranded, site-specific manner. This is Lon protease 1 from Myxococcus xanthus.